The chain runs to 146 residues: Hemoglobin subunit beta-2 (146 aa).

Positions 2 to 146 (EWTDFERATI…VVSALGRQYH (145 aa)) constitute a Globin domain. Residues His63 and His92 each contribute to the heme b site.

This sequence belongs to the globin family. As to quaternary structure, hb3 is a heterotetramer of two alpha-2 chains and two beta-2 chains. As to expression, red blood cells.

Its function is as follows. Involved in oxygen transport from gills to the various peripheral tissues. This chain is Hemoglobin subunit beta-2 (hbb2), found in Anarhichas minor (Arctic spotted wolffish).